The primary structure comprises 581 residues: 2-hydroxyacyl-CoA lyase 1 (581 aa).

Ser-4 and Ser-6 each carry phosphoserine. Residue Glu-63 coordinates thiamine diphosphate. N6-succinyllysine occurs at positions 354, 361, and 368. Positions 404–487 (TMDIGRTMLQ…IILLVVNNNG (84 aa)) are thiamine pyrophosphate binding. Asp-458 and Asn-485 together coordinate Mg(2+). The Microbody targeting signal signature appears at 579 to 581 (SNM).

Belongs to the TPP enzyme family. As to quaternary structure, homotetramer. Mg(2+) serves as cofactor. The cofactor is thiamine diphosphate. In terms of tissue distribution, predominanly expressed in liver.

Its subcellular location is the peroxisome. It carries out the reaction a 2-hydroxy-3-methyl fatty acyl-CoA = a 2-methyl-branched fatty aldehyde + formyl-CoA. The catalysed reaction is an (R)-2-hydroxy-long-chain-fatty acyl-CoA = a long-chain fatty aldehyde + formyl-CoA. It catalyses the reaction 2-hydroxy-3-methylhexadecanoyl-CoA = 2-methylpentadecanal + formyl-CoA. The enzyme catalyses 2-hydroxyoctadecanoyl-CoA = heptadecanal + formyl-CoA. It carries out the reaction 2-hydroxyphytanoyl-CoA = 2,6,10,14-tetramethylpentadecanal + formyl-CoA. Its pathway is lipid metabolism; fatty acid metabolism. In terms of biological role, peroxisomal 2-OH acyl-CoA lyase involved in the cleavage (C1 removal) reaction in the fatty acid alpha-oxydation in a thiamine pyrophosphate (TPP)-dependent manner. Involved in the degradation of 3-methyl-branched fatty acids like phytanic acid and the shortening of 2-hydroxy long-chain fatty acids. Plays a significant role in the biosynthesis of heptadecanal in the liver. The chain is 2-hydroxyacyl-CoA lyase 1 (Hacl1) from Mus musculus (Mouse).